The chain runs to 284 residues: Putative ABC transporter ATP-binding protein SCO5958 (284 aa).

Positions 15 to 250 (VALRGAAFAY…DLLRRAGLRL (236 aa)) constitute an ABC transporter domain. 48 to 55 (GRNGSGKT) is a binding site for ATP.

Belongs to the ABC transporter superfamily.

It is found in the cell membrane. Its function is as follows. Probably part of an ABC transporter complex. Responsible for energy coupling to the transport system. The protein is Putative ABC transporter ATP-binding protein SCO5958 of Streptomyces coelicolor (strain ATCC BAA-471 / A3(2) / M145).